We begin with the raw amino-acid sequence, 219 residues long: Ribose-5-phosphate isomerase A (219 aa).

Substrate-binding positions include 28–31, 81–84, and 94–97; these read SGST, DGAD, and KGGG. Glu-103 functions as the Proton acceptor in the catalytic mechanism. Lys-121 contacts substrate.

The protein belongs to the ribose 5-phosphate isomerase family. As to quaternary structure, homodimer.

The enzyme catalyses aldehydo-D-ribose 5-phosphate = D-ribulose 5-phosphate. Its pathway is carbohydrate degradation; pentose phosphate pathway; D-ribose 5-phosphate from D-ribulose 5-phosphate (non-oxidative stage): step 1/1. Functionally, catalyzes the reversible conversion of ribose-5-phosphate to ribulose 5-phosphate. This is Ribose-5-phosphate isomerase A from Glaesserella parasuis serovar 5 (strain SH0165) (Haemophilus parasuis).